Consider the following 917-residue polypeptide: Chitin synthase 1 (917 aa).

Positions 1-11 (MAYHGRGDGYD) are enriched in basic and acidic residues. The interval 1–56 (MAYHGRGDGYDGHQLQDLPGGHNQGDQHDDAQAPFLSENPMPYDNDRLGTDTPPVR) is disordered. Residues 1–570 (MAYHGRGDGY…YKSGHNIVRM (570 aa)) are Extracellular-facing. N-linked (GlcNAc...) asparagine glycosylation is present at Asn544. Residues 571-591 (FFFHVQLIYNIANVIFTWFSL) form a helical membrane-spanning segment. Residues 592–629 (ASYWLTTTVIMDLVGTPVTASSSSAEHHGWPFGDTVTP) are Cytoplasmic-facing. Residues 630–650 (FFNAVLKYIYLAFVILQFILA) traverse the membrane as a helical segment. The Extracellular portion of the chain corresponds to 651 to 664 (LGNRPKGSKWTYIT). The helical transmembrane segment at 665–685 (SFFVFSLIQSYILVLSGYLVA) threads the bilayer. The Cytoplasmic portion of the chain corresponds to 686–716 (RAFSVPLDQQLQLDNAKDAMASLFGGSGSAG). A helical transmembrane segment spans residues 717–737 (VILVALVTIYGLYFLASFMYL). The Extracellular portion of the chain corresponds to 738 to 744 (DPWHMFH). Residues 745–765 (SFPYYMLLMSTYINILMIYAF) traverse the membrane as a helical segment. At 766-843 (NNWHDVSWGT…DLEDSYKSFR (78 aa)) the chain is on the cytoplasmic side. The helical transmembrane segment at 844-864 (TMLVVSWLFSNCLLAVVITSD) threads the bilayer. Residues 865-884 (NFNTFGIGQTASARTAWFFK) are Extracellular-facing. The helical transmembrane segment at 885–905 (FLLFATGALSVIRFIGFCWFL) threads the bilayer. Topologically, residues 906–917 (GRTGIMCCFARR) are cytoplasmic.

Belongs to the chitin synthase family. Class III subfamily.

Its subcellular location is the cell membrane. It catalyses the reaction [(1-&gt;4)-N-acetyl-beta-D-glucosaminyl](n) + UDP-N-acetyl-alpha-D-glucosamine = [(1-&gt;4)-N-acetyl-beta-D-glucosaminyl](n+1) + UDP + H(+). Polymerizes chitin, a structural polymer of the cell wall and septum, by transferring the sugar moiety of UDP-GlcNAc to the non-reducing end of the growing chitin polymer. This is Chitin synthase 1 (chs-1) from Neurospora crassa (strain ATCC 24698 / 74-OR23-1A / CBS 708.71 / DSM 1257 / FGSC 987).